The chain runs to 461 residues: Tumor necrosis factor receptor superfamily member 1A (461 aa).

Positions 1 to 29 (MGLSTVPGLLLPLVLRALLVDVYPAGVHG) are cleaved as a signal peptide. Residues 30–210 (LVLHPGDREK…RNDFQDTGTT (181 aa)) lie on the Extracellular side of the membrane. TNFR-Cys repeat units follow at residues 43 to 82 (LCPQ…TDCR), 83 to 125 (ECDN…DTVC), 126 to 166 (GCRK…DTIC), and 167 to 195 (NCHS…NLCP). 7 disulfide bridges follow: cysteine 44–cysteine 58, cysteine 59–cysteine 72, cysteine 62–cysteine 81, cysteine 84–cysteine 99, cysteine 102–cysteine 117, cysteine 105–cysteine 125, and cysteine 127–cysteine 143. N-linked (GlcNAc...) asparagine glycosylation occurs at asparagine 54. Residue asparagine 86 is glycosylated (N-linked (GlcNAc...) asparagine). N-linked (GlcNAc...) asparagine glycans are attached at residues asparagine 145 and asparagine 151. 5 disulfide bridges follow: cysteine 146/cysteine 158, cysteine 149/cysteine 166, cysteine 168/cysteine 179, cysteine 182/cysteine 194, and cysteine 185/cysteine 190. Residues 211–233 (VLLPLVIFFGLCLAFFLFVGLAC) form a helical membrane-spanning segment. The Cytoplasmic segment spans residues 234–461 (RYQRWKPKLY…RLAPAPHLLR (228 aa)). Residues 340 to 350 (LPKWGGSAHSA) are N-SMase activation domain (NSD). The region spanning 362-447 (PATLYAVVDG…GCLEDIEEAL (86 aa)) is the Death domain.

In terms of assembly, binding of TNF to the extracellular domain leads to homotrimerization. The aggregated death domains provide a novel molecular interface that interacts specifically with the death domain of TRADD. Various TRADD-interacting proteins such as TRAFS, RIPK1 and possibly FADD, are recruited to the complex by their association with TRADD. This complex activates at least two distinct signaling cascades, apoptosis and NF-kappa-B signaling. Interacts with BAG4, BABAM2, FEM1B, GRB2, SQSTM1 and TRPC4AP. Interacts with DAB2IP. Interacts directly with NOL3 (via CARD domain); inhibits TNF-signaling pathway. Interacts with SH3RF2, TRADD and RIPK1. SH3RF2 facilitates the recruitment of RIPK1 and TRADD to TNFRSF1A in a TNF-alpha-dependent process. Interacts with PGLYRP1; this interaction is important for cell death induction. Interacts (via death domain) with MADD (via death domain).

It is found in the cell membrane. Its subcellular location is the golgi apparatus membrane. In terms of biological role, receptor for TNFSF2/TNF-alpha and homotrimeric TNFSF1/lymphotoxin-alpha. The adapter molecule FADD recruits caspase-8 to the activated receptor. The resulting death-inducing signaling complex (DISC) performs caspase-8 proteolytic activation which initiates the subsequent cascade of caspases (aspartate-specific cysteine proteases) mediating apoptosis. This Sus scrofa (Pig) protein is Tumor necrosis factor receptor superfamily member 1A (TNFRSF1A).